Reading from the N-terminus, the 705-residue chain is Voltage-dependent calcium channel beta subunit-associated regulatory protein (705 aa).

Residues M1–Y45 are Extracellular-facing. N29 carries N-linked (GlcNAc...) asparagine glycosylation. A helical; Signal-anchor for type III membrane protein transmembrane segment spans residues V46–V66. Over L67–A705 the chain is Cytoplasmic. 2 disordered regions span residues T91–E113 and G212–A284. A compositionally biased stretch (polar residues) spans P245–G254. Gly residues predominate over residues G267–A284. S299 and S304 each carry phosphoserine. Disordered regions lie at residues P316–Q353, F369–D436, A448–Y540, and H559–S655. Over residues T344 to Q353 the composition is skewed to acidic residues. The segment covering H371 to A382 has biased composition (pro residues). Over residues L383–P397 the composition is skewed to low complexity. Positions A479–P488 are enriched in pro residues. Over residues R489–L499 the composition is skewed to basic and acidic residues. A phosphoserine mark is found at S507 and S528. Positions A567 to R585 are enriched in basic residues. A compositionally biased stretch (low complexity) spans G591–A614. At S621 the chain carries Phosphoserine. T698 bears the Phosphothreonine mark. Phosphoserine occurs at positions 699 and 703.

As to quaternary structure, interacts with voltage-dependent calcium channels CACNB1, CACNB2, CACNB3 and CACNB4 beta subunits; prevents their interaction with the CACNA1C alpha subunit thereby negatively regulating the activity of the corresponding calcium channels.

Its subcellular location is the cytoplasmic vesicle. The protein localises to the secretory vesicle. The protein resides in the synaptic vesicle membrane. It localises to the cell membrane. It is found in the cell projection. Its subcellular location is the growth cone. In terms of biological role, negatively regulates voltage-gated calcium channels by preventing the interaction between their alpha and beta subunits. Thereby, negatively regulates calcium channels activity at the plasma membrane and indirectly inhibits calcium-regulated exocytosis. The polypeptide is Voltage-dependent calcium channel beta subunit-associated regulatory protein (Homo sapiens (Human)).